The sequence spans 438 residues: (S)-3,5-dihydroxyphenylglycine transaminase (438 aa).

N6-(pyridoxal phosphate)lysine is present on Lys266.

Belongs to the class-I pyridoxal-phosphate-dependent aminotransferase family. It depends on pyridoxal 5'-phosphate as a cofactor.

It catalyses the reaction (S)-3,5-dihydroxyphenylglycine + 2-oxoglutarate = 2-(3,5-dihydroxyphenyl)-2-oxoacetate + L-glutamate. Its pathway is antibiotic biosynthesis; vancomycin biosynthesis. Functionally, catalyzes the transamination of p-hydroxybenzoylformate to L-p-hydroxyphenylglycine as part of the biosynthesis of the (S)-3,5-dihydroxyphenylglycine constituent of the glycopeptide antibiotic chloroeremomycin, a member of the vancomycin group of antibiotics. The polypeptide is (S)-3,5-dihydroxyphenylglycine transaminase (hpgT) (Amycolatopsis orientalis (Nocardia orientalis)).